We begin with the raw amino-acid sequence, 81 residues long: Delta-conotoxin-like Ac6.3 (81 aa).

The N-terminal stretch at 1–22 (MKLTCVMIVAVLFLTAWTFVTA) is a signal peptide. The propeptide occupies 23–51 (DDSRNGLENLSPKARHEMKNPEASKSNKR). Disulfide bonds link C54/C69, C61/C73, and C68/C78.

The protein belongs to the conotoxin O1 superfamily. In terms of tissue distribution, expressed by the venom duct.

Its subcellular location is the secreted. Its function is as follows. Delta-conotoxins bind to site 6 of voltage-gated sodium channels (Nav) and inhibit the inactivation process. The protein is Delta-conotoxin-like Ac6.3 of Conus achatinus (Little frog cone).